Here is a 129-residue protein sequence, read N- to C-terminus: Prefoldin subunit 6 (129 aa).

N-acetylalanine is present on Ala2. Lys21 carries the N6-acetyllysine modification. An N6-acetyllysine; alternate modification is found at Lys66. A Glycyl lysine isopeptide (Lys-Gly) (interchain with G-Cter in SUMO1); alternate cross-link involves residue Lys66. Lys66 is covalently cross-linked (Glycyl lysine isopeptide (Lys-Gly) (interchain with G-Cter in SUMO2); alternate).

This sequence belongs to the prefoldin subunit beta family. In terms of assembly, heterohexamer of two PFD-alpha type and four PFD-beta type subunits. Component of the PAQosome complex which is responsible for the biogenesis of several protein complexes and which consists of R2TP complex members RUVBL1, RUVBL2, RPAP3 and PIH1D1, URI complex members PFDN2, PFDN6, PDRG1, UXT and URI1 as well as ASDURF, POLR2E and DNAAF10/WDR92.

Functionally, binds specifically to cytosolic chaperonin (c-CPN) and transfers target proteins to it. Binds to nascent polypeptide chain and promotes folding in an environment in which there are many competing pathways for nonnative proteins. This chain is Prefoldin subunit 6 (PFDN6), found in Canis lupus familiaris (Dog).